The chain runs to 732 residues: Probable boron transporter 3 (732 aa).

N-acetylmethionine is present on methionine 1. Residues 1 to 37 are Cytoplasmic-facing; sequence MDEAESFVPFQGIKKDVKGRLNCYKQDWISGLRAGFR. The helical transmembrane segment at 38-58 threads the bilayer; that stretch reads ILAPTTYIFFASAIPVITFGE. The Extracellular portion of the chain corresponds to 59-77; it reads QLERDTDGKITAVQTLVST. A helical membrane pass occupies residues 78–98; sequence ALCGVIHSIIGGQPLLILGVA. At 99–123 the chain is on the cytoplasmic side; the sequence is EPTVIMYTFMFNFAKSRTDLGSNLF. Residues 124 to 144 traverse the membrane as a helical segment; sequence LAWTGWVCLWTGLLLFLLAVL. Residues 145–157 lie on the Extracellular side of the membrane; it reads GACTFINRFTRLA. Residues 158–178 traverse the membrane as a helical segment; the sequence is GELFGILIAMLFMQEAIRGIV. Topologically, residues 179–197 are cytoplasmic; the sequence is DEFGVPGRTNPRSAEFQPA. Residues 198–218 traverse the membrane as a helical segment; sequence WVFANGMFGLVLSSGLLYTGL. The Extracellular segment spans residues 219–234; the sequence is KSRKARSWRFGAEWLR. A helical transmembrane segment spans residues 235–255; that stretch reads GFIADYGVPVMVVVWTCISYI. Over 256–291 the chain is Cytoplasmic; the sequence is PWKSVPQGIPRRLVSPNPWSPGAYQNWTVIKEMVDV. The helical transmembrane segment at 292 to 312 threads the bilayer; that stretch reads PVLYILLAVVPASMIAVLYYF. Residues 313 to 339 are Extracellular-facing; that stretch reads DHSVASQLAQQEDFNLRKPPAYHYDLF. The helical transmembrane segment at 340 to 360 threads the bilayer; it reads LLGFLTILCGLIGIPPSNGVI. Over 361-463 the chain is Cytoplasmic; that stretch reads PQSPMHTKSL…ILPVEVKEQR (103 aa). Residues 464 to 484 traverse the membrane as a helical segment; it reads VSNFLQAMMVAGCVAAMPLIK. At 485-556 the chain is on the extracellular side; sequence RIPSSVLWGY…LFQTAYLLVC (72 aa). The helical transmembrane segment at 557–577 threads the bilayer; the sequence is FGITWVPVAGVLFPLMIMFLV. The Cytoplasmic portion of the chain corresponds to 578–732; sequence PVRQYVLPNF…QRLSNLGKSV (155 aa). The segment at 695–732 is disordered; the sequence is GGGEISPRSSAGRAPFSPRSATGGGGGEQRLSNLGKSV.

Belongs to the anion exchanger (TC 2.A.31.3) family.

It localises to the membrane. In terms of biological role, probable boron transporter. Boron is essential for maintaining the integrity of plants cell walls. The polypeptide is Probable boron transporter 3 (BOR3) (Arabidopsis thaliana (Mouse-ear cress)).